The chain runs to 1236 residues: ATP-dependent helicase/nuclease subunit A (1236 aa).

The region spanning 4–473 (VKWTKEQQQA…VNLFKNFRSR (470 aa)) is the UvrD-like helicase ATP-binding domain. 25-32 (AAAGSGKT) lines the ATP pocket. Residues 512–806 (YEDKSLVGGP…RIMSIHKSKG (295 aa)) enclose the UvrD-like helicase C-terminal domain.

This sequence belongs to the helicase family. AddA subfamily. In terms of assembly, heterodimer of AddA and AddB/RexB. Requires Mg(2+) as cofactor.

It catalyses the reaction Couples ATP hydrolysis with the unwinding of duplex DNA by translocating in the 3'-5' direction.. The enzyme catalyses ATP + H2O = ADP + phosphate + H(+). The heterodimer acts as both an ATP-dependent DNA helicase and an ATP-dependent, dual-direction single-stranded exonuclease. Recognizes the chi site generating a DNA molecule suitable for the initiation of homologous recombination. The AddA nuclease domain is required for chi fragment generation; this subunit has the helicase and 3' -&gt; 5' nuclease activities. In Clostridium novyi (strain NT), this protein is ATP-dependent helicase/nuclease subunit A.